The following is a 233-amino-acid chain: 7-cyano-7-deazaguanine synthase (233 aa).

13–23 serves as a coordination point for ATP; the sequence is LSGGLDSATAM. Zn(2+)-binding residues include cysteine 197, cysteine 207, cysteine 210, and cysteine 213.

This sequence belongs to the QueC family. Requires Zn(2+) as cofactor.

The enzyme catalyses 7-carboxy-7-deazaguanine + NH4(+) + ATP = 7-cyano-7-deazaguanine + ADP + phosphate + H2O + H(+). It participates in purine metabolism; 7-cyano-7-deazaguanine biosynthesis. Its function is as follows. Catalyzes the ATP-dependent conversion of 7-carboxy-7-deazaguanine (CDG) to 7-cyano-7-deazaguanine (preQ(0)). This chain is 7-cyano-7-deazaguanine synthase, found in Desulfatibacillum aliphaticivorans.